The primary structure comprises 1025 residues: Error-prone DNA polymerase (1025 aa).

This sequence belongs to the DNA polymerase type-C family. DnaE2 subfamily.

The protein resides in the cytoplasm. It catalyses the reaction DNA(n) + a 2'-deoxyribonucleoside 5'-triphosphate = DNA(n+1) + diphosphate. In terms of biological role, DNA polymerase involved in damage-induced mutagenesis and translesion synthesis (TLS). It is not the major replicative DNA polymerase. The polypeptide is Error-prone DNA polymerase (Alkalilimnicola ehrlichii (strain ATCC BAA-1101 / DSM 17681 / MLHE-1)).